A 100-amino-acid polypeptide reads, in one-letter code: Small ribosomal subunit protein uS14c (100 aa).

It belongs to the universal ribosomal protein uS14 family. In terms of assembly, part of the 30S ribosomal subunit.

The protein localises to the plastid. Its subcellular location is the chloroplast. Binds 16S rRNA, required for the assembly of 30S particles. The chain is Small ribosomal subunit protein uS14c from Chlamydomonas reinhardtii (Chlamydomonas smithii).